Consider the following 59-residue polypeptide: Large ribosomal subunit protein uL30 (59 aa).

Belongs to the universal ribosomal protein uL30 family. As to quaternary structure, part of the 50S ribosomal subunit.

The chain is Large ribosomal subunit protein uL30 from Bacillus subtilis (strain 168).